The sequence spans 241 residues: uncharacterized protein (241 aa).

Positions 84 to 216 constitute a GGDEF domain; that stretch reads TVVSLVVCDL…APGPVVAGRD (133 aa). Positions 215–241 are disordered; sequence RDGEVVRLADSPPKSAHDRRRLRGNRP. The span at 231-241 shows a compositional bias: basic residues; it reads HDRRRLRGNRP.

This is an uncharacterized protein from Streptomyces griseus.